The chain runs to 312 residues: Pyridoxal kinase (312 aa).

Met-1 carries the post-translational modification N-acetylmethionine. Pyridoxal-binding residues include Ser-12 and Thr-47. Thr-47 contributes to the pyridoxal 5'-phosphate binding site. Position 59 is a phosphoserine (Ser-59). Position 113 (Asp-113) interacts with ATP. Asp-113 lines the Na(+) pocket. A Mg(2+)-binding site is contributed by Asp-118. Residue Thr-148 coordinates Na(+). Residues Asn-150–Glu-153 and Thr-186–Ser-187 each bind ATP. Thr-186 is a binding site for Na(+). Residue Ser-213 is modified to Phosphoserine. ATP contacts are provided by residues Val-226–Ala-228 and Thr-233. A pyridoxal 5'-phosphate-binding site is contributed by Gly-234 to Asp-235. Catalysis depends on Asp-235, which acts as the Proton acceptor. Ser-285 carries the post-translational modification Phosphoserine.

It belongs to the pyridoxine kinase family. As to quaternary structure, homodimer. The cofactor is Zn(2+). Requires Mg(2+) as cofactor.

The protein localises to the cytoplasm. It localises to the cytosol. The enzyme catalyses pyridoxal + ATP = pyridoxal 5'-phosphate + ADP + H(+). It catalyses the reaction pyridoxamine + ATP = pyridoxamine 5'-phosphate + ADP + H(+). The catalysed reaction is pyridoxine + ATP = pyridoxine 5'-phosphate + ADP + H(+). It functions in the pathway cofactor metabolism; pyridoxal 5'-phosphate salvage; pyridoxal 5'-phosphate from pyridoxal: step 1/1. It participates in cofactor metabolism; pyridoxal 5'-phosphate salvage; pyridoxine 5'-phosphate from pyridoxine: step 1/1. The protein operates within cofactor metabolism; pyridoxal 5'-phosphate salvage; pyridoxamine 5'-phosphate from pyridoxamine: step 1/1. Activity is increased in the presence of K(+)or Na(+). Its function is as follows. Catalyzes the phosphorylation of the dietary vitamin B6 vitamers pyridoxal (PL), pyridoxine (PN) and pyridoxamine (PM) to form pyridoxal 5'-phosphate (PLP), pyridoxine 5'-phosphate (PNP) and pyridoxamine 5'-phosphate (PMP), respectively. PLP is the active form of vitamin B6, and acts as a cofactor for over 140 different enzymatic reactions. This chain is Pyridoxal kinase (PDXK), found in Bos taurus (Bovine).